Consider the following 632-residue polypeptide: MAU2 chromatid cohesion factor homolog (632 aa).

2 TPR repeats span residues 453-486 (GGFY…ANAE) and 493-526 (SCSL…ASKI).

Belongs to the SCC4/mau-2 family. In terms of assembly, interacts with Nipped-B to form the cohesin loading complex.

The protein localises to the nucleus. The protein resides in the nucleoplasm. In terms of biological role, required for association of the cohesin complex with chromatin during interphase. Plays a role in sister chromatid cohesion and normal progression through prometaphase. The chain is MAU2 chromatid cohesion factor homolog from Drosophila erecta (Fruit fly).